Reading from the N-terminus, the 382-residue chain is Dual-specificity RNA methyltransferase RlmN (382 aa).

Catalysis depends on glutamate 96, which acts as the Proton acceptor. The region spanning 102 to 342 (QGGRGTLCVS…VRTTRGEDID (241 aa)) is the Radical SAM core domain. The cysteines at positions 109 and 345 are disulfide-linked. Cysteine 116, cysteine 120, and cysteine 123 together coordinate [4Fe-4S] cluster. S-adenosyl-L-methionine is bound by residues 170 to 171 (GE), serine 202, 224 to 226 (SLH), and asparagine 302. Catalysis depends on cysteine 345, which acts as the S-methylcysteine intermediate.

This sequence belongs to the radical SAM superfamily. RlmN family. It depends on [4Fe-4S] cluster as a cofactor.

It localises to the cytoplasm. It catalyses the reaction adenosine(2503) in 23S rRNA + 2 reduced [2Fe-2S]-[ferredoxin] + 2 S-adenosyl-L-methionine = 2-methyladenosine(2503) in 23S rRNA + 5'-deoxyadenosine + L-methionine + 2 oxidized [2Fe-2S]-[ferredoxin] + S-adenosyl-L-homocysteine. The enzyme catalyses adenosine(37) in tRNA + 2 reduced [2Fe-2S]-[ferredoxin] + 2 S-adenosyl-L-methionine = 2-methyladenosine(37) in tRNA + 5'-deoxyadenosine + L-methionine + 2 oxidized [2Fe-2S]-[ferredoxin] + S-adenosyl-L-homocysteine. Its function is as follows. Specifically methylates position 2 of adenine 2503 in 23S rRNA and position 2 of adenine 37 in tRNAs. m2A2503 modification seems to play a crucial role in the proofreading step occurring at the peptidyl transferase center and thus would serve to optimize ribosomal fidelity. The sequence is that of Dual-specificity RNA methyltransferase RlmN from Stutzerimonas stutzeri (strain A1501) (Pseudomonas stutzeri).